Reading from the N-terminus, the 258-residue chain is Protein UL24 homolog (258 aa).

The protein belongs to the herpesviridae UL24 family.

The protein resides in the virion. It localises to the host cytoplasm. Its subcellular location is the host nucleus. The protein localises to the host nucleolus. It is found in the host Golgi apparatus. May participate in nuclear egress of viral particles. Plays a role in the dispersal of several host nucleolar proteins including NCL/nucleolin and NPM1. Since deletion of host NCL/nucleolin negatively impact on nuclear egress, UL24 supposedly acts on this process through its effect on host nucleoli. This chain is Protein UL24 homolog, found in Homo sapiens (Human).